The following is a 534-amino-acid chain: MSGQQERAERQREELSASASPPSRFVLGLDVGSTVIRCHVYDQTARVRGSSAQKVENVYPQPGWVEIDPDSLWAQFVAVIKDAVKAAGVQMNQIVGLGISTQRATFITWNKKTGHHFHNFISWQDLRAAELVKSWNNSLIMKLLHGATRVLHFFSRSKVMLTVSRFNFSTQHATLRLTWILQNLSEVKRAVEEDNCCFGTIDTWLLYKLTKGSSYATDYSNASTTGFFDPYAMRWSRLITTMVSIPLSILPPVKDTSYNFGSVDEKIFGVPIPVVALVGDQQSAMFGECCFETGDVKLTMGTGTFLDINTGKNLQHVNGGFYPLIGWKIGQELVCLAEGNAGDTGTAIMWAQKLDLFTDAAETEKMALSLEDSEGVYFVPSFSGLQAPLNDPCACASFMGLKHSTNKYHLVRAILESIAFRNKQLYDMLQREIQIPVTNIRADGGVCNNAFVMQMTSDLINEKIDRPAHFDMSCLGAASLAGLAVGFWADKEELQKLRQSEMVFKPQKKWQEYEVNMENWVKAVKRSMNWYNKT.

Residues serine 33 and threonine 34 each contribute to the ATP site. The glycerol site is built by arginine 103, aspartate 280, and glutamine 281. Residues threonine 302, glycine 345, and glycine 445 each coordinate ATP.

Belongs to the FGGY kinase family. Expressed predominantly in sebaceous glands.

Its subcellular location is the cytoplasm. It catalyses the reaction glycerol + ATP = sn-glycerol 3-phosphate + ADP + H(+). It participates in polyol metabolism; glycerol degradation via glycerol kinase pathway; sn-glycerol 3-phosphate from glycerol: step 1/1. Functionally, skin-specific kinase that plays a key role in glycerol metabolism, catalyzing its phosphorylation to produce sn-glycerol 3-phosphate. Involved in skin-specific regulation of sterol regulatory element-binding protein (SREBP) processing and lipid biosynthesis. This is Glycerol kinase 5 (Gk5) from Mus musculus (Mouse).